We begin with the raw amino-acid sequence, 502 residues long: Maturase K (502 aa).

The protein belongs to the intron maturase 2 family. MatK subfamily.

Its subcellular location is the plastid. It is found in the chloroplast. Usually encoded in the trnK tRNA gene intron. Probably assists in splicing its own and other chloroplast group II introns. This is Maturase K from Vitis vinifera (Grape).